The sequence spans 212 residues: Large ribosomal subunit protein uL1 (212 aa).

This sequence belongs to the universal ribosomal protein uL1 family. Part of the 50S ribosomal subunit.

Binds directly to 23S rRNA. Probably involved in E site tRNA release. Its function is as follows. Protein L1 is also a translational repressor protein, it controls the translation of its operon by binding to its mRNA. The sequence is that of Large ribosomal subunit protein uL1 from Natronomonas pharaonis (strain ATCC 35678 / DSM 2160 / CIP 103997 / JCM 8858 / NBRC 14720 / NCIMB 2260 / Gabara) (Halobacterium pharaonis).